Here is a 468-residue protein sequence, read N- to C-terminus: UDP-N-acetylmuramate--L-alanine ligase (468 aa).

Residue 121-127 (GSHGKTT) coordinates ATP.

This sequence belongs to the MurCDEF family.

The protein localises to the cytoplasm. It carries out the reaction UDP-N-acetyl-alpha-D-muramate + L-alanine + ATP = UDP-N-acetyl-alpha-D-muramoyl-L-alanine + ADP + phosphate + H(+). The protein operates within cell wall biogenesis; peptidoglycan biosynthesis. Its function is as follows. Cell wall formation. The sequence is that of UDP-N-acetylmuramate--L-alanine ligase from Borreliella burgdorferi (strain ATCC 35210 / DSM 4680 / CIP 102532 / B31) (Borrelia burgdorferi).